A 118-amino-acid polypeptide reads, in one-letter code: Group 1 truncated hemoglobin GlbN (118 aa).

A heme-binding site is contributed by His-70.

This sequence belongs to the truncated hemoglobin family. Group I subfamily. As to quaternary structure, monomer. It depends on heme as a cofactor.

The protein resides in the membrane. This chain is Group 1 truncated hemoglobin GlbN (glbN), found in Nostoc commune.